A 483-amino-acid chain; its full sequence is Regulatory protein ViaA (483 aa).

The protein belongs to the ViaA family. As to quaternary structure, homodimer. Interacts with RavA.

The protein localises to the cytoplasm. Component of the RavA-ViaA chaperone complex, which may act on the membrane to optimize the function of some of the respiratory chains. ViaA stimulates the ATPase activity of RavA. The sequence is that of Regulatory protein ViaA from Salmonella agona (strain SL483).